Here is a 148-residue protein sequence, read N- to C-terminus: Large ribosomal subunit protein uL15 (148 aa).

Residues 1 to 50 form a disordered region; it reads MNLSNLKPAEGSTKTRKRIGRGPGSGLGGTSTRGHKGAKSRSGYSKKIGF. The span at 21 to 31 shows a compositional bias: gly residues; it reads RGPGSGLGGTS.

This sequence belongs to the universal ribosomal protein uL15 family. In terms of assembly, part of the 50S ribosomal subunit.

Functionally, binds to the 23S rRNA. The protein is Large ribosomal subunit protein uL15 of Bacteroides fragilis (strain ATCC 25285 / DSM 2151 / CCUG 4856 / JCM 11019 / LMG 10263 / NCTC 9343 / Onslow / VPI 2553 / EN-2).